Reading from the N-terminus, the 214-residue chain is 3-isopropylmalate dehydratase small subunit (214 aa).

This sequence belongs to the LeuD family. LeuD type 1 subfamily. In terms of assembly, heterodimer of LeuC and LeuD.

It catalyses the reaction (2R,3S)-3-isopropylmalate = (2S)-2-isopropylmalate. It functions in the pathway amino-acid biosynthesis; L-leucine biosynthesis; L-leucine from 3-methyl-2-oxobutanoate: step 2/4. In terms of biological role, catalyzes the isomerization between 2-isopropylmalate and 3-isopropylmalate, via the formation of 2-isopropylmaleate. This is 3-isopropylmalate dehydratase small subunit from Pseudomonas entomophila (strain L48).